Reading from the N-terminus, the 380-residue chain is Chorismate synthase (380 aa).

Residues arginine 40 and arginine 46 each coordinate NADP(+). Residues 128 to 130 (RSS), 247 to 248 (QA), glycine 292, 307 to 311 (KPIPT), and arginine 333 each bind FMN.

It belongs to the chorismate synthase family. Homotetramer. FMNH2 is required as a cofactor.

The enzyme catalyses 5-O-(1-carboxyvinyl)-3-phosphoshikimate = chorismate + phosphate. The protein operates within metabolic intermediate biosynthesis; chorismate biosynthesis; chorismate from D-erythrose 4-phosphate and phosphoenolpyruvate: step 7/7. In terms of biological role, catalyzes the anti-1,4-elimination of the C-3 phosphate and the C-6 proR hydrogen from 5-enolpyruvylshikimate-3-phosphate (EPSP) to yield chorismate, which is the branch point compound that serves as the starting substrate for the three terminal pathways of aromatic amino acid biosynthesis. This reaction introduces a second double bond into the aromatic ring system. The sequence is that of Chorismate synthase from Alkaliphilus metalliredigens (strain QYMF).